The sequence spans 375 residues: UDP-4-amino-4,6-dideoxy-N-acetyl-beta-L-altrosamine transaminase (375 aa).

Substrate contacts are provided by residues Tyr-6, 26 to 29 (KQLT), Ala-56, and Ser-178. At Lys-183 the chain carries N6-(pyridoxal phosphate)lysine. Substrate-binding positions include Asn-228 and 313 to 316 (QVHY).

Belongs to the DegT/DnrJ/EryC1 family.

The enzyme catalyses UDP-4-amino-4,6-dideoxy-N-acetyl-beta-L-altrosamine + 2-oxoglutarate = UDP-2-acetamido-2,6-dideoxy-beta-L-arabino-hex-4-ulose + L-glutamate. In terms of biological role, catalyzes the second step in the biosynthesis of pseudaminic acid, a sialic-acid-like sugar that is used to modify flagellin. Uses UDP-2-acetamido-2,6-dideoxy-beta-L-arabino-4-hexulose as substrate producing UDP-4-amino-4,6-dideoxy-beta-L-AltNAc. This chain is UDP-4-amino-4,6-dideoxy-N-acetyl-beta-L-altrosamine transaminase (pseC), found in Helicobacter pylori (strain ATCC 700392 / 26695) (Campylobacter pylori).